The chain runs to 387 residues: MAITKYLVSALAVAGLAFAKDCAGDLTIENQQDVSTLSSCEKWDGDIVISEVVKSSISLTGVKQITGSLKAKNSSITELSAPNLNSIGDALSLSTCTALRSLDLSSLTKVKTLSLEALPKLQALGFTRTVSQATSILITNTDLTSLQGLDLETVGDFMVTNNPHLMEINVNKMTNITGYLNFAANNKQLSVKFPNLEGAHNMTFRNVSDASLPSLHKMDGLLGFYSNFFMNISAPNLTATGDLVFTSNSAVMNISMPKLETVKGGLQLANNSLLEDIEGFPALKLITGALDITGKFKTVKLPSLKEVRGDANLQSTETFGCDPWQKLKDSDVIRGKLTCRERQEKPKTGDDHSGGDEEGHKGAAAAFAKAPAAALLIAFVGALQFFL.

Residues 1–19 (MAITKYLVSALAVAGLAFA) form the signal peptide. 8 N-linked (GlcNAc...) asparagine glycosylation sites follow: Asn73, Asn175, Asn201, Asn206, Asn231, Asn236, Asn253, and Asn270. Positions 338-361 (TCRERQEKPKTGDDHSGGDEEGHK) are enriched in basic and acidic residues. The interval 338–362 (TCRERQEKPKTGDDHSGGDEEGHKG) is disordered. A lipid anchor (GPI-anchor amidated alanine) is attached at Ala364. The propeptide at 365-387 (AAFAKAPAAALLIAFVGALQFFL) is removed in mature form.

Belongs to the SPS2 family. Post-translationally, the GPI-anchor is attached to the protein in the endoplasmic reticulum and serves to target the protein to the cell surface. There, the glucosamine-inositol phospholipid moiety is cleaved off and the GPI-modified mannoprotein is covalently attached via its lipidless GPI glycan remnant to the 1,6-beta-glucan of the outer cell wall layer.

It localises to the cell membrane. The protein localises to the secreted. The protein resides in the cell wall. Functionally, required for proper cell wall integrity and for the correct assembly of the mannoprotein outer layer of the cell wall. This is Cell surface GPI-anchored protein ARB_01627 from Arthroderma benhamiae (strain ATCC MYA-4681 / CBS 112371) (Trichophyton mentagrophytes).